The sequence spans 32 residues: Zinc metalloproteinase carinactivase-1 catalytic subunit (32 aa).

In terms of domain architecture, Peptidase M12B spans 10 to 32 (FIKLVIVVDHSMVXKXNNDLIAI).

This sequence belongs to the venom metalloproteinase (M12B) family. P-III subfamily. P-IIId sub-subfamily. In terms of assembly, heterodimer of a metalloproteinase subunit and a regulatory subunit comprising two disulfide-linked lectins (14 kDa and 17 kDa chains) (AC Q9PRP7 and AC Q9PRP8). Zn(2+) is required as a cofactor. As to expression, expressed by the venom gland.

It localises to the secreted. In terms of biological role, calcium-dependent prothrombin (F2) activator. This protein may activate prothrombin via recognition by the regulatory subunit of the calcium ion bound conformation of its gamma-carboxyglutamic acid (GLA) domain, and the subsequent conversion of prothrombin to active thrombin is catalyzed by the catalytic subunit. This Echis carinatus (Saw-scaled viper) protein is Zinc metalloproteinase carinactivase-1 catalytic subunit.